Reading from the N-terminus, the 168-residue chain is Ribosome maturation factor RimM (168 aa).

One can recognise a PRC barrel domain in the interval 97 to 168 (PNEYYYYELL…RLVVKVPEWI (72 aa)).

Belongs to the RimM family. As to quaternary structure, binds ribosomal protein uS19.

The protein resides in the cytoplasm. Functionally, an accessory protein needed during the final step in the assembly of 30S ribosomal subunit, possibly for assembly of the head region. Essential for efficient processing of 16S rRNA. May be needed both before and after RbfA during the maturation of 16S rRNA. It has affinity for free ribosomal 30S subunits but not for 70S ribosomes. This Pseudothermotoga lettingae (strain ATCC BAA-301 / DSM 14385 / NBRC 107922 / TMO) (Thermotoga lettingae) protein is Ribosome maturation factor RimM.